The following is a 352-amino-acid chain: Spermidine/putrescine import ATP-binding protein PotA (352 aa).

In terms of domain architecture, ABC transporter spans Ile-7–Ile-237. Gly-39–Thr-46 is an ATP binding site.

Belongs to the ABC transporter superfamily. Spermidine/putrescine importer (TC 3.A.1.11.1) family. As to quaternary structure, the complex is composed of two ATP-binding proteins (PotA), two transmembrane proteins (PotB and PotC) and a solute-binding protein (PotD).

The protein resides in the cell membrane. It catalyses the reaction ATP + H2O + polyamine-[polyamine-binding protein]Side 1 = ADP + phosphate + polyamineSide 2 + [polyamine-binding protein]Side 1.. Its function is as follows. Part of the ABC transporter complex PotABCD involved in spermidine/putrescine import. Responsible for energy coupling to the transport system. The protein is Spermidine/putrescine import ATP-binding protein PotA of Acetivibrio thermocellus (strain ATCC 27405 / DSM 1237 / JCM 9322 / NBRC 103400 / NCIMB 10682 / NRRL B-4536 / VPI 7372) (Clostridium thermocellum).